A 116-amino-acid polypeptide reads, in one-letter code: MTDKKVTRLRRARKARLKMHELEVVRLCVYRSSQHIYAQVISADGNKVLASASTLDKELRDGATGNIDAATKVGQLVATRAKAAGVSQVAFDRSGFKYHGRVKALADAAREAGLEF.

The protein belongs to the universal ribosomal protein uL18 family. As to quaternary structure, part of the 50S ribosomal subunit; part of the 5S rRNA/L5/L18/L25 subcomplex. Contacts the 5S and 23S rRNAs.

In terms of biological role, this is one of the proteins that bind and probably mediate the attachment of the 5S RNA into the large ribosomal subunit, where it forms part of the central protuberance. The chain is Large ribosomal subunit protein uL18 from Pseudomonas fluorescens (strain SBW25).